We begin with the raw amino-acid sequence, 159 residues long: Urease subunit beta 2 (159 aa).

Positions 1–23 are disordered; the sequence is MAKEPTEAAHPQPEQTKTNHKAH.

The protein belongs to the urease beta subunit family. Heterotrimer of UreA (gamma), UreB (beta) and UreC (alpha) subunits. Three heterotrimers associate to form the active enzyme.

Its subcellular location is the cytoplasm. It carries out the reaction urea + 2 H2O + H(+) = hydrogencarbonate + 2 NH4(+). Its pathway is nitrogen metabolism; urea degradation; CO(2) and NH(3) from urea (urease route): step 1/1. This Brucella abortus biovar 1 (strain 9-941) protein is Urease subunit beta 2.